Reading from the N-terminus, the 479-residue chain is Citrate synthase, mitochondrial (479 aa).

A mitochondrion-targeting transit peptide spans 1–37 (MSAILSTTSKSFLSRGSTRQCQNMQKALFALLNARHY). Residues histidine 312, histidine 358, and aspartate 413 contribute to the active site. The residue at position 462 (serine 462) is a Phosphoserine.

It belongs to the citrate synthase family. As to quaternary structure, monomer and homodimer. Exists as an inactive monomer when phosphorylated. Homodimerization is dependent on dephosphorylation of Ser-462 by PTC7 and is required for activity. Phosphorylation at Ser-462. Dephosphorylated at Ser-462 by PTC7.

The protein localises to the mitochondrion matrix. The enzyme catalyses oxaloacetate + acetyl-CoA + H2O = citrate + CoA + H(+). Its pathway is carbohydrate metabolism; tricarboxylic acid cycle; isocitrate from oxaloacetate: step 1/2. Phosphorylation at Ser-462 inhibits catalytic activity. Dephosphorylation at Ser-462 by PTC7 enhances catalytic activity. Its function is as follows. Specific citrate synthase with catalytic activity only with acetyl-CoA. The chain is Citrate synthase, mitochondrial from Saccharomyces cerevisiae (strain ATCC 204508 / S288c) (Baker's yeast).